Consider the following 1148-residue polypeptide: Minor outer capsid protein P2 (1148 aa).

One can recognise a PPPDE domain in the interval 930-1148 (QDGTANIFQK…QYIQSIYDEL (219 aa)). Active-site residues include H954 and C1111.

It belongs to the phytoreovirus minor outer capsid protein P2 family.

The protein localises to the virion. It is found in the host cytoplasm. Minor capsid protein present in the outer capsid, which is required for adsorption of the virus onto host insect cells. The protein is Minor outer capsid protein P2 of Nephotettix cincticeps (Green rice leafhopper).